The following is a 37-amino-acid chain: Cytochrome b6-f complex subunit 5 (37 aa).

Residues Leu5 to Ala25 form a helical membrane-spanning segment.

Belongs to the PetG family. The 4 large subunits of the cytochrome b6-f complex are cytochrome b6, subunit IV (17 kDa polypeptide, PetD), cytochrome f and the Rieske protein, while the 4 small subunits are PetG, PetL, PetM and PetN. The complex functions as a dimer.

It localises to the plastid. It is found in the chloroplast thylakoid membrane. Its function is as follows. Component of the cytochrome b6-f complex, which mediates electron transfer between photosystem II (PSII) and photosystem I (PSI), cyclic electron flow around PSI, and state transitions. PetG is required for either the stability or assembly of the cytochrome b6-f complex. This chain is Cytochrome b6-f complex subunit 5, found in Stigeoclonium helveticum (Green alga).